A 472-amino-acid polypeptide reads, in one-letter code: Argininosuccinate lyase (472 aa).

The protein belongs to the lyase 1 family. Argininosuccinate lyase subfamily.

It is found in the cytoplasm. It catalyses the reaction 2-(N(omega)-L-arginino)succinate = fumarate + L-arginine. It functions in the pathway amino-acid biosynthesis; L-arginine biosynthesis; L-arginine from L-ornithine and carbamoyl phosphate: step 3/3. The polypeptide is Argininosuccinate lyase (Polynucleobacter necessarius subsp. necessarius (strain STIR1)).